The chain runs to 397 residues: Protein PEP-RELATED DEVELOPMENT ARRESTED 1, chloroplastic (397 aa).

The N-terminal 52 residues, 1 to 52 (MLQSIHLRFSSTPSPSKRESLIIPSVICSFPFTSSSFRPKQTQKLKRLVQFC), are a transit peptide targeting the chloroplast. The segment covering 315–334 (KDEGADNLSKEDDSSTEGRK) has biased composition (basic and acidic residues). Residues 315–351 (KDEGADNLSKEDDSSTEGRKPSGLNGRGSVTGRKPLP) form a disordered region.

As to quaternary structure, interacts with FSD2 and MRL7. Highly expressed in young leaves, shoots and flowers. Expressed at low levels in stems and siliques.

It is found in the plastid. Its subcellular location is the chloroplast stroma. The protein resides in the chloroplast nucleoid. Its function is as follows. Plays an essential role in early steps of chloroplast development. May be involved in the redox control of plastid gene expression by maintening the redox state around chloroplast nucleoids. May positively regulate plastid-encoded RNA polymerase (PEP) activity, through binding to FSD2. The polypeptide is Protein PEP-RELATED DEVELOPMENT ARRESTED 1, chloroplastic (PRDA1) (Arabidopsis thaliana (Mouse-ear cress)).